The primary structure comprises 218 residues: Glutathione S-transferase Mu 2 (218 aa).

One can recognise a GST N-terminal domain in the interval 2-88 (PMTLGYWNIR…YIARKHNLCG (87 aa)). 7–8 (YW) contributes to the glutathione binding site. Ser27 and Ser44 each carry phosphoserine. Residues 43-46 (RSQW), Lys50, 59-60 (NL), and 72-73 (QS) contribute to the glutathione site. The 119-residue stretch at 90–208 (SEKEQIREDI…KSSRFLPRPV (119 aa)) folds into the GST C-terminal domain. Tyr116 provides a ligand contact to substrate.

It belongs to the GST superfamily. Mu family. Homodimer. As to expression, muscle.

The protein resides in the cytoplasm. The enzyme catalyses RX + glutathione = an S-substituted glutathione + a halide anion + H(+). The catalysed reaction is 11(S)-hydroxy-14(S),15(S)-epoxy-(5Z,8Z,12E)-eicosatrienoate + glutathione = (11S,15S)-dihydroxy-14(R)-S-glutathionyl-(5Z,8Z,12E)-eicosatrienoate. Conjugation of reduced glutathione to a wide number of exogenous and endogenous hydrophobic electrophiles. Participates in the formation of novel hepoxilin regioisomers. The protein is Glutathione S-transferase Mu 2 of Homo sapiens (Human).